A 308-amino-acid polypeptide reads, in one-letter code: D-alanine--D-alanine ligase (308 aa).

Positions 106 to 305 (KMLWKAFGLP…FEQLVVKILE (200 aa)) constitute an ATP-grasp domain. 136-191 (VEKLGLPLMVKPSLEGSSVGLTKVNAIDDLKSAVEFALQYDETVLIEEWLSGDELT) lines the ATP pocket. 3 residues coordinate Mg(2+): aspartate 259, glutamate 272, and asparagine 274.

The protein belongs to the D-alanine--D-alanine ligase family. Mg(2+) is required as a cofactor. The cofactor is Mn(2+).

The protein resides in the cytoplasm. The catalysed reaction is 2 D-alanine + ATP = D-alanyl-D-alanine + ADP + phosphate + H(+). It functions in the pathway cell wall biogenesis; peptidoglycan biosynthesis. Functionally, cell wall formation. This Histophilus somni (strain 2336) (Haemophilus somnus) protein is D-alanine--D-alanine ligase.